The following is a 327-amino-acid chain: Annexin A8-like protein 1 (327 aa).

Annexin repeat units lie at residues 21–92 (FNPD…ALMY), 93–164 (PPYR…CLLQ), 177–249 (ALAL…TVVK), and 253–324 (NLHS…SLVG). Ca(2+) contacts are provided by methionine 266, glycine 268, glycine 270, and aspartate 310.

Belongs to the annexin family.

In Homo sapiens (Human), this protein is Annexin A8-like protein 1.